Consider the following 115-residue polypeptide: UPF0102 protein NGO_1987 (115 aa).

Belongs to the UPF0102 family.

This chain is UPF0102 protein NGO_1987, found in Neisseria gonorrhoeae (strain ATCC 700825 / FA 1090).